Here is a 483-residue protein sequence, read N- to C-terminus: ATP synthase subunit beta (483 aa).

162–169 (GGAGVGKT) is an ATP binding site.

This sequence belongs to the ATPase alpha/beta chains family. F-type ATPases have 2 components, CF(1) - the catalytic core - and CF(0) - the membrane proton channel. CF(1) has five subunits: alpha(3), beta(3), gamma(1), delta(1), epsilon(1). CF(0) has four main subunits: a(1), b(1), b'(1) and c(9-12).

The protein resides in the cellular thylakoid membrane. It catalyses the reaction ATP + H2O + 4 H(+)(in) = ADP + phosphate + 5 H(+)(out). Its function is as follows. Produces ATP from ADP in the presence of a proton gradient across the membrane. The catalytic sites are hosted primarily by the beta subunits. The chain is ATP synthase subunit beta from Rippkaea orientalis (strain PCC 8801 / RF-1) (Cyanothece sp. (strain PCC 8801)).